Here is a 1041-residue protein sequence, read N- to C-terminus: Isoleucine--tRNA ligase (1041 aa).

Positions 53–63 (PFANGLPHYGH) match the 'HIGH' region motif. Positions 619–623 (KMSKS) match the 'KMSKS' region motif. K622 contributes to the ATP binding site.

This sequence belongs to the class-I aminoacyl-tRNA synthetase family. IleS type 2 subfamily. In terms of assembly, monomer. The cofactor is Zn(2+).

The protein localises to the cytoplasm. It carries out the reaction tRNA(Ile) + L-isoleucine + ATP = L-isoleucyl-tRNA(Ile) + AMP + diphosphate. Its function is as follows. Catalyzes the attachment of isoleucine to tRNA(Ile). As IleRS can inadvertently accommodate and process structurally similar amino acids such as valine, to avoid such errors it has two additional distinct tRNA(Ile)-dependent editing activities. One activity is designated as 'pretransfer' editing and involves the hydrolysis of activated Val-AMP. The other activity is designated 'posttransfer' editing and involves deacylation of mischarged Val-tRNA(Ile). The sequence is that of Isoleucine--tRNA ligase (ileS) from Mycobacterium tuberculosis (strain CDC 1551 / Oshkosh).